The sequence spans 438 residues: MPKIVVVGAVAGGATCASQIRRLDKESDIIIFEKDRDMSFANCALPYVIGEVVEDRRYALAYTPEKFYDRKQITVKTYHEVIAINDERQTVSVLNRKTNEQFEESYDKLILSPGASANSLGFESDITFTLRNLEDTDAIDQFIKANQVDKVLVVGAGYVSLEVLENLYERGLHPTLIHRSDKINKLMDADMNQPILDELDKREIPYRLNEEINAINGNEITFKSGKVEHYDMIIEGVGTHPNSKFIESSNIKLDRKGFIPVNDKFETNVPNIYAIGDIATSHYRHVDLPASVPLAWGAHRAASIVAEQIAGNDTIEFKGFLGNNIVKFFDYTFASVGVKPNELKQFDYKMVEVTQGAHANYYPGNSPLHLRVYYDTSNRQILRAAAVGKEGADKRIDVLSMAMMNQLTVDELTEFEVAYAPPYSHPKDLINMIGYKAK.

Position 8-33 (8-33 (GAVAGGATCASQIRRLDKESDIIIFE)) interacts with FAD. Thr-15, Gln-19, Arg-22, Ser-39, and Asn-42 together coordinate substrate. Catalysis depends on Cys-43, which acts as the Nucleophile. Cys-43 (redox-active) is an active-site residue. Lys-71 serves as a coordination point for substrate. Residue 151 to 166 (VLVVGAGYVSLEVLEN) participates in NADP(+) binding. 267–277 (TNVPNIYAIGD) lines the FAD pocket. Substrate is bound at residue His-299. Tyr-419 lines the FAD pocket. Substrate is bound at residue Lys-427.

It belongs to the class-III pyridine nucleotide-disulfide oxidoreductase family. Homodimer. The cofactor is FAD.

It carries out the reaction NADP(+) + 2 CoA = CoA-disulfide + NADPH + H(+). Catalyzes specifically the NADPH-dependent reduction of coenzyme A disulfide. The protein is Coenzyme A disulfide reductase of Staphylococcus aureus (strain USA300).